Here is a 271-residue protein sequence, read N- to C-terminus: MSYLQDDKPVTLFEIGKMRAEGRKISMLTCYDASFASLLERAGVDILLVGDSLGNVVQGQKSTLPVTLEHMIYHTECVVRGSTRPFIVTDMPFGAYHESPSQAMHNAASLLAAGAQMVKLEGGTFMAETVRFLVERGIPVCAHIGLTPQSVHQLGGYRVQGRSEAAAAQLKGDALALEQAGAALMVMEMVPAALAREVTASLASMATIGIGAGPDCDGQVLVLHDMIGVYPGKKARFVRNFMTGKTDIDEAVASYVQAVRDGSFPAAEHCY.

Positions 51 and 90 each coordinate Mg(2+). 3-methyl-2-oxobutanoate-binding positions include 51-52 (DS), Asp-90, and Lys-119. Glu-121 contacts Mg(2+). The active-site Proton acceptor is the Glu-188.

The protein belongs to the PanB family. In terms of assembly, homodecamer; pentamer of dimers. Mg(2+) is required as a cofactor.

The protein resides in the cytoplasm. The enzyme catalyses 3-methyl-2-oxobutanoate + (6R)-5,10-methylene-5,6,7,8-tetrahydrofolate + H2O = 2-dehydropantoate + (6S)-5,6,7,8-tetrahydrofolate. Its pathway is cofactor biosynthesis; (R)-pantothenate biosynthesis; (R)-pantoate from 3-methyl-2-oxobutanoate: step 1/2. Functionally, catalyzes the reversible reaction in which hydroxymethyl group from 5,10-methylenetetrahydrofolate is transferred onto alpha-ketoisovalerate to form ketopantoate. This Aromatoleum aromaticum (strain DSM 19018 / LMG 30748 / EbN1) (Azoarcus sp. (strain EbN1)) protein is 3-methyl-2-oxobutanoate hydroxymethyltransferase.